An 88-amino-acid chain; its full sequence is Small ribosomal subunit protein bS16c (88 aa).

This sequence belongs to the bacterial ribosomal protein bS16 family.

Its subcellular location is the plastid. The protein resides in the chloroplast. The protein is Small ribosomal subunit protein bS16c of Gossypium barbadense (Sea Island cotton).